The chain runs to 1042 residues: V(D)J recombination-activating protein 1 (1042 aa).

Over residues 40–52 the composition is skewed to basic and acidic residues; it reads KTTEENQKEKNSS. The tract at residues 40-80 is disordered; that stretch reads KTTEENQKEKNSSEGKPSLEQSPAVLDKASGQKPEVAPPAF. A Glycyl lysine isopeptide (Lys-Gly) (interchain with G-Cter in ubiquitin) cross-link involves residue Lys-233. Cys-268, His-272, Cys-292, Cys-295, His-297, Cys-307, His-309, Cys-312, Cys-315, Cys-327, Cys-330, Cys-357, Cys-362, His-374, and His-378 together coordinate Zn(2+). The RING-type zinc-finger motif lies at 292–331; that stretch reads CQICEHILADPVETSCKHVFCRICILRCLKVMGSYCPSCQ. The RAG1-type zinc-finger motif lies at 353–382; it reads LIVKCSAPECNEEVSLEKYNHHVSSHKESR. The NBD DNA-binding region spans 391–458; it reads GGRPRQHLLS…QADELEAIMQ (68 aa). A divalent metal cation-binding residues include Asp-602, Asp-710, and Glu-964.

Belongs to the RAG1 family. In terms of assembly, homodimer. Component of the RAG complex composed of core components RAG1 and RAG2, and associated component HMGB1 or HMGB2. Interacts with DCAF1, leading to recruitment of the CUL4A-RBX1-DDB1-DCAF1/VPRBP complex to ubiquitinate proteins and limit error-prone repair during V(D)J recombination. It depends on Mg(2+) as a cofactor. Mn(2+) is required as a cofactor. Post-translationally, autoubiquitinated in the presence of CDC34/UBCH3.

Its subcellular location is the nucleus. The catalysed reaction is S-ubiquitinyl-[E2 ubiquitin-conjugating enzyme]-L-cysteine + [acceptor protein]-L-lysine = [E2 ubiquitin-conjugating enzyme]-L-cysteine + N(6)-ubiquitinyl-[acceptor protein]-L-lysine.. In terms of biological role, catalytic component of the RAG complex, a multiprotein complex that mediates the DNA cleavage phase during V(D)J recombination. V(D)J recombination assembles a diverse repertoire of immunoglobulin and T-cell receptor genes in developing B and T-lymphocytes through rearrangement of different V (variable), in some cases D (diversity), and J (joining) gene segments. In the RAG complex, RAG1 mediates the DNA-binding to the conserved recombination signal sequences (RSS) and catalyzes the DNA cleavage activities by introducing a double-strand break between the RSS and the adjacent coding segment. RAG2 is not a catalytic component but is required for all known catalytic activities. DNA cleavage occurs in 2 steps: a first nick is introduced in the top strand immediately upstream of the heptamer, generating a 3'-hydroxyl group that can attack the phosphodiester bond on the opposite strand in a direct transesterification reaction, thereby creating 4 DNA ends: 2 hairpin coding ends and 2 blunt, 5'-phosphorylated ends. The chromatin structure plays an essential role in the V(D)J recombination reactions and the presence of histone H3 trimethylated at 'Lys-4' (H3K4me3) stimulates both the nicking and haipinning steps. The RAG complex also plays a role in pre-B cell allelic exclusion, a process leading to expression of a single immunoglobulin heavy chain allele to enforce clonality and monospecific recognition by the B-cell antigen receptor (BCR) expressed on individual B-lymphocytes. The introduction of DNA breaks by the RAG complex on one immunoglobulin allele induces ATM-dependent repositioning of the other allele to pericentromeric heterochromatin, preventing accessibility to the RAG complex and recombination of the second allele. In addition to its endonuclease activity, RAG1 also acts as an E3 ubiquitin-protein ligase that mediates monoubiquitination of histone H3. Histone H3 monoubiquitination is required for the joining step of V(D)J recombination. Mediates polyubiquitination of KPNA1. The chain is V(D)J recombination-activating protein 1 (RAG1) from Oryctolagus cuniculus (Rabbit).